An 860-amino-acid polypeptide reads, in one-letter code: Transcription factor E2F8 (860 aa).

Residues 1-114 are disordered; sequence MENQKENLFS…NEKSQPSRKE (114 aa). Position 71 is a phosphoserine (S71). Basic and acidic residues-rich tracts occupy residues 74-84 and 92-114; these read IRSRDQKRGLS and EARD…SRKE. 2 DNA-binding regions span residues 112 to 181 and 261 to 347; these read RKEK…TWHG and RKDK…KWTG. Disordered regions lie at residues 407–433 and 533–616; these read RRKI…PPVP and TPPH…PKED. Low complexity predominate over residues 411 to 426; the sequence is SSAPSSPVKSSKAESS. A phosphoserine mark is found at S412 and S416. Positions 542 to 554 are enriched in polar residues; sequence VCPTQSSNATGSK. Basic and acidic residues-rich tracts occupy residues 555–565 and 586–596; these read DPTDAPTEKTA and RSKETTGDRGT.

The protein belongs to the E2F/DP family. As to quaternary structure, homodimer and heterodimer: mainly forms homodimers and, to a lesser extent, heterodimers with E2F8. Dimerization is important for DNA-binding. Interacts with HIF1A.

Its subcellular location is the nucleus. Atypical E2F transcription factor that participates in various processes such as angiogenesis and polyploidization of specialized cells. Mainly acts as a transcription repressor that binds DNA independently of DP proteins and specifically recognizes the E2 recognition site 5'-TTTC[CG]CGC-3'. Directly represses transcription of classical E2F transcription factors such as E2F1: component of a feedback loop in S phase by repressing the expression of E2F1, thereby preventing p53/TP53-dependent apoptosis. Plays a key role in polyploidization of cells in placenta and liver by regulating the endocycle, probably by repressing genes promoting cytokinesis and antagonizing action of classical E2F proteins (E2F1, E2F2 and/or E2F3). Required for placental development by promoting polyploidization of trophoblast giant cells. Acts as a promoter of sprouting angiogenesis, possibly by acting as a transcription activator: associates with HIF1A, recognizes and binds the VEGFA promoter, which is different from canonical E2 recognition site, and activates expression of the VEGFA gene. This is Transcription factor E2F8 (E2f8) from Rattus norvegicus (Rat).